Reading from the N-terminus, the 269-residue chain is Zinc import ATP-binding protein ZnuC (269 aa).

Positions 6–221 (VRLTQVGVSF…PAFVELFGQD (216 aa)) constitute an ABC transporter domain. Residue 38–45 (GPNGAGKT) coordinates ATP.

This sequence belongs to the ABC transporter superfamily. Zinc importer (TC 3.A.1.15.5) family. As to quaternary structure, the complex is composed of two ATP-binding proteins (ZnuC), two transmembrane proteins (ZnuB) and a solute-binding protein (ZnuA).

The protein localises to the cell inner membrane. The catalysed reaction is Zn(2+)(out) + ATP(in) + H2O(in) = Zn(2+)(in) + ADP(in) + phosphate(in) + H(+)(in). Its function is as follows. Part of the ABC transporter complex ZnuABC involved in zinc import. Responsible for energy coupling to the transport system. The protein is Zinc import ATP-binding protein ZnuC of Pseudomonas aeruginosa (strain UCBPP-PA14).